Consider the following 204-residue polypeptide: ATP phosphoribosyltransferase (204 aa).

Belongs to the ATP phosphoribosyltransferase family. Short subfamily. In terms of assembly, heteromultimer composed of HisG and HisZ subunits.

It localises to the cytoplasm. The enzyme catalyses 1-(5-phospho-beta-D-ribosyl)-ATP + diphosphate = 5-phospho-alpha-D-ribose 1-diphosphate + ATP. It functions in the pathway amino-acid biosynthesis; L-histidine biosynthesis; L-histidine from 5-phospho-alpha-D-ribose 1-diphosphate: step 1/9. Catalyzes the condensation of ATP and 5-phosphoribose 1-diphosphate to form N'-(5'-phosphoribosyl)-ATP (PR-ATP). Has a crucial role in the pathway because the rate of histidine biosynthesis seems to be controlled primarily by regulation of HisG enzymatic activity. The protein is ATP phosphoribosyltransferase of Staphylococcus aureus (strain MRSA252).